Reading from the N-terminus, the 527-residue chain is Plant-specific TFIIB-related protein PTF2 (527 aa).

The TFIIB-type zinc finger occupies 1-30; sequence MRCKRCNGSNFERDEDTGNSYCGGCGTLRE.

In terms of assembly, can form homodimer. Interacts with TBP2. As to expression, expressed in shoot apical meristems, root tips, primordia of lateral roots, inflorescences, developing pollen grains and embryos.

The protein resides in the nucleus. Plant-specific TFIIB-related protein that plays important roles in pollen germination and embryogenesis, possibly by regulating gene expression through interaction with TBP2 and the subunits of RNA polymerases. Binds double-stranded DNA in vitro. The polypeptide is Plant-specific TFIIB-related protein PTF2 (Arabidopsis thaliana (Mouse-ear cress)).